Reading from the N-terminus, the 1129-residue chain is Eukaryotic translation initiation factor 3 subunit A (1129 aa).

The region spanning 319 to 502 (LQRMAAHVLL…NSIYFGTDLT (184 aa)) is the PCI domain. Disordered stretches follow at residues 590-633 (NNAR…NEIQ) and 836-1129 (AAEA…VKRR). Basic and acidic residues-rich tracts occupy residues 836–903 (AAEA…RSER), 923–964 (DRND…KDTD), 971–985 (WRVR…RERG), 994–1044 (GRDD…DQPQ), and 1053–1076 (DSPR…RDIR). Gly residues predominate over residues 1080–1091 (PKEGGGGGGGGN). The segment covering 1098–1119 (PRDEKPPVKRDQPQDKENKAGD) has biased composition (basic and acidic residues).

Belongs to the eIF-3 subunit A family. As to quaternary structure, component of the eukaryotic translation initiation factor 3 (eIF-3) complex. The eIF-3 complex interacts with pix.

It is found in the cytoplasm. Its function is as follows. RNA-binding component of the eukaryotic translation initiation factor 3 (eIF-3) complex, which is involved in protein synthesis of a specialized repertoire of mRNAs and, together with other initiation factors, stimulates binding of mRNA and methionyl-tRNAi to the 40S ribosome. The eIF-3 complex specifically targets and initiates translation of a subset of mRNAs involved in cell proliferation. The protein is Eukaryotic translation initiation factor 3 subunit A of Drosophila mojavensis (Fruit fly).